Reading from the N-terminus, the 424-residue chain is MAFSTIVVLFVAAVGFGNKISSADTCPEFGEWKPWTECLWYPMQNIYDKMTASCGLPGHRNLTNILPLPPGFTIPPPCGHCSFKTRCRTRPKKEGCYPFDGEREICHEHGDICTIAKLPGIGCGWTVLQEVVKQCLSRPDIPEYMRAGYKKLFHMLPKGHCIEKDNQCKCCCGDYEPNEDGTECVKQQDHQCAPFNEPGDWSECLWFPLADMFKKVQSHCGVEGKPEGLSPSSLAPAGFQIPEKCGFCSFRLKCQSREKKEGCFPLKVDKKSCGAEDCPTCGDVCTLDKQNNSCAFTKAMGMKFWNSFAHKAKESNLAHWRRDGYADLFKFLPYGHCKEVGDKCKCCCHPYEPNEDGTACVVKQYCKSLEEVGGKKQQKDQPESEKKAENMPETTGNASHHQHRHHHGDSSSESHEQHHHHHHH.

An N-terminal signal peptide occupies residues 1 to 17; sequence MAFSTIVVLFVAAVGFG. N-linked (GlcNAc...) asparagine glycosylation occurs at Asn291. Over residues 372–390 the composition is skewed to basic and acidic residues; it reads VGGKKQQKDQPESEKKAEN. The interval 372–424 is disordered; sequence VGGKKQQKDQPESEKKAENMPETTGNASHHQHRHHHGDSSSESHEQHHHHHHH. N-linked (GlcNAc...) asparagine glycosylation occurs at Asn397.

Glycosylated. As to expression, expressed in larval tissues like cuticle, hypodermis and muscle (at protein level). Note=Not excreted into striated muscle fibers or nurse cell.

Its subcellular location is the secreted. In terms of biological role, binds iron and zinc. May bind nickel. The polypeptide is Poly-cysteine and histidine-tailed protein (Trichinella spiralis (Trichina worm)).